Reading from the N-terminus, the 569-residue chain is Beta-galactoside-specific lectin 3 (569 aa).

A signal peptide spans 1-33 (MNAVMDSRGAWVSCFLILGLVFGATVKAETKFS). Residue Glu-198 is part of the active site. Intrachain disulfides connect Cys-280/Cys-311, Cys-327/Cys-346, and Cys-370/Cys-387. Residues 288-307 (EVRYWPLVIRPVLENSGAVD) constitute a propeptide, connecting peptide. Positions 314 to 441 (SEPTVRIVGR…YSLGQGWLAG (128 aa)) constitute a Ricin B-type lectin 1 domain. D-galactose is bound at residue 329-331 (DVR). N-linked (GlcNAc...) asparagine glycosylation is found at Asn-402 and Asn-442. One can recognise a Ricin B-type lectin 2 domain in the interval 445–568 (APREVTIYGF…GNPNQMWLPV (124 aa)). 2 disulfide bridges follow: Cys-458/Cys-471 and Cys-497/Cys-514. 541–543 (DVA) contacts D-galactose.

Belongs to the ribosome-inactivating protein family. Type 2 RIP subfamily. In terms of assembly, disulfide-linked dimer of A and B chains.

The enzyme catalyses Endohydrolysis of the N-glycosidic bond at one specific adenosine on the 28S rRNA.. The A chain is responsible for inhibiting protein synthesis through the catalytic inactivation of 60S ribosomal subunits by removing adenine from position 4,324 of 28S rRNA. The B chain binds to cell receptors and probably facilitates the entry into the cell of the A chain; B chains are also responsible for cell agglutination (lectin activity). Inhibits growth of the human tumor cell line Molt4. This is Beta-galactoside-specific lectin 3 from Viscum album (European mistletoe).